Consider the following 441-residue polypeptide: Eukaryotic translation initiation factor 3 subunit M (441 aa).

The region spanning E196–Y365 is the PCI domain. The span at K405 to S418 shows a compositional bias: basic and acidic residues. The disordered stretch occupies residues K405–E441.

This sequence belongs to the eIF-3 subunit M family. In terms of assembly, component of the eukaryotic translation initiation factor 3 (eIF-3) complex.

Its subcellular location is the cytoplasm. Functionally, component of the eukaryotic translation initiation factor 3 (eIF-3) complex, which is involved in protein synthesis of a specialized repertoire of mRNAs and, together with other initiation factors, stimulates binding of mRNA and methionyl-tRNAi to the 40S ribosome. The eIF-3 complex specifically targets and initiates translation of a subset of mRNAs involved in cell proliferation. The protein is Eukaryotic translation initiation factor 3 subunit M of Phaeosphaeria nodorum (strain SN15 / ATCC MYA-4574 / FGSC 10173) (Glume blotch fungus).